A 376-amino-acid polypeptide reads, in one-letter code: MEQDLRSIPASKLDKFIENHLPDTSFCADLREVIDALCALLKDRSFRGPVRRMRASKGVKGKGTTLKGRSDADLVVFLNNLTSFEDQLNQQGVLIKEIKKQLCEVQHERRCGVKFEVHSLRSPNSRALSFKLSAPDLLKEVKFDVLPAYDLLDHLNILKKPNQQFYANLISGRTPPGKEGKLSICFMGLRKYFLNCRPTKLKRLIRLVTHWYQLCKEKLGDPLPPQYALELLTVYAWEYGSRVTKFNTAQGFRTVLELVTKYKQLQIYWTVYYDFRHQEVSEYLHQQLKKDRPVILDPADPTRNIAGLNPKDWRRLAGEAAAWLQYPCFKYRDGSSVCSWEVPTEVGVPMKYLLCRIFWLLFWSLFHFIFGKTSSG.

The Cytoplasmic portion of the chain corresponds to 1–351; the sequence is MEQDLRSIPA…VPTEVGVPMK (351 aa). A helical; Anchor for type IV membrane protein membrane pass occupies residues 352-370; the sequence is YLLCRIFWLLFWSLFHFIF. At 371–376 the chain is on the extracellular side; sequence GKTSSG.

It belongs to the 2-5A synthase family. As to quaternary structure, interacts with OSBPL1A and ABCF3. As to expression, highly expressed in lung, spleen and thymus. Also detected at lower levels in heart, kidney, liver, lung, skeletal muscle, testes, uterus and ovaries.

The protein localises to the endoplasmic reticulum membrane. Does not have 2'-5'-OAS activity, but can bind double-stranded RNA. The full-length protein displays antiviral activity against flaviviruses such as west Nile virus (WNV) via an alternative antiviral pathway independent of RNase L. The truncated form of the protein lacks antiviral activity. This Mus musculus (Mouse) protein is Inactive 2'-5'-oligoadenylate synthase 1B (Oas1b).